The following is a 249-amino-acid chain: MAGHSKWANIKRQKARVDAKKGSLFTKLSRAIIVAARNGLPDPDANFRLRSAVEKAKAAGMPAETIERAIAKGSGNWADDSPLEEIRYEGYGPGGVAVLIEAMTDNRNRTAAEVREAFSKVGGSLGESGCVSWLFRQKGVISLEGVTDPEALLLAVAEAGGEDLKVEGTDAEVYCDYTLLEQVATYLKKEGYQVQEAAIRWIPSTEVHVEDPETAKLVLTLMERLDHLDDVQNVYANFEIDEALMESLA.

It belongs to the TACO1 family.

It localises to the cytoplasm. The protein is Probable transcriptional regulatory protein CYA_2259 of Synechococcus sp. (strain JA-3-3Ab) (Cyanobacteria bacterium Yellowstone A-Prime).